We begin with the raw amino-acid sequence, 426 residues long: Docking protein 3 (426 aa).

A PH domain is found at 4-115; the sequence is PVKDGIIYVQ…WIEQLCQLAF (112 aa). In terms of domain architecture, IRS-type PTB spans 145–249; the sequence is DLTEFPVLVL…ACQQQGQESP (105 aa). Positions 243–282 are disordered; sequence QQGQESPQPSAQGLSNQPWGAEAEDPQCSPTLGRAHSGSH. Residues 247 to 260 show a composition bias toward polar residues; that stretch reads ESPQPSAQGLSNQP. Tyr-331 bears the Phosphotyrosine mark. The segment at 357–426 is disordered; the sequence is GCRQAPEGHS…RDGPGARDWS (70 aa). Over residues 402-411 the composition is skewed to basic residues; that stretch reads KPQRTLRAKL.

This sequence belongs to the DOK family. Type A subfamily. Homooligomer. Interacts with GRB2 and INPP5D/SHIP. In terms of processing, tyrosine-phosphorylated in the presence of GRB2.

The protein localises to the cytoplasm. The protein resides in the cell membrane. Functionally, DOK proteins are enzymatically inert adaptor or scaffolding proteins. They provide a docking platform for the assembly of multimolecular signaling complexes. Plays a role as negative regulator of the mobilization of calcium ions and of calcium signaling. This chain is Docking protein 3 (DOK3), found in Gallus gallus (Chicken).